A 258-amino-acid chain; its full sequence is Short-chain dehydrogenase/reductase aba4 (258 aa).

NADP(+)-binding residues include Ile20, Asp66, and Lys130. Active-site proton donor residues include Ser146 and Tyr160. Residues Tyr160, Lys164, Ile193, and Thr195 each coordinate NADP(+). Residue Lys164 is the Lowers pKa of active site Tyr of the active site.

Belongs to the short-chain dehydrogenases/reductases (SDR) family.

It functions in the pathway hormone biosynthesis. Short-chain dehydrogenase/reductase; part of the gene cluster that mediates the biosynthesis of abscisic acid (ABA), a phytohormone that acts antagonistically toward salicylic acid (SA), jasmonic acid (JA) and ethylene (ETH) signaling, to impede plant defense responses. The first step of the pathway catalyzes the reaction from farnesyl diphosphate to alpha-ionylideneethane performed by the alpha-ionylideneethane synthase aba3 via a three-step reaction mechanism involving 2 neutral intermediates, beta-farnesene and allofarnesene. The cytochrome P450 monooxygenase aba1 might then be involved in the conversion of alpha-ionylideneethane to alpha-ionylideneacetic acid. Alpha-ionylideneacetic acid is further converted to abscisic acid in 2 steps involving the cytochrome P450 monooxygenase aba2 and the short-chain dehydrogenase/reductase aba4, via the intermediates 1'-deoxy-ABA or 1',4'-trans-diol-ABA, depending on the order of action of these 2 enzymes. Aba2 is responsible for the hydroxylation of carbon atom C-1' and aba4 might be involved in the oxidation of the C-4' carbon atom. This is Short-chain dehydrogenase/reductase aba4 from Botryotinia fuckeliana (Noble rot fungus).